The chain runs to 157 residues: Transcription antitermination protein NusB (157 aa).

The protein belongs to the NusB family.

Its function is as follows. Involved in transcription antitermination. Required for transcription of ribosomal RNA (rRNA) genes. Binds specifically to the boxA antiterminator sequence of the ribosomal RNA (rrn) operons. This chain is Transcription antitermination protein NusB, found in Helicobacter hepaticus (strain ATCC 51449 / 3B1).